A 515-amino-acid polypeptide reads, in one-letter code: MVRASEQEQETYRSRLFNFKWRNNDNNSATRHNKSLSVETGLDEAATGSHDAEPLTIIHPSQGPPLSRSAADEAVLAALAASQARERQLLADMEQMKERFSKLLLGEDNSGGGKGVSSALALSNAITNLAASVFGEQRRLEPMPAERRARWRKEIDWLLSVTDYVVEFAPSQQKNKDGTNMEIMTTRQRTDLHMNIPALKKLDAMLIDCLENFKDQSEFSYISKDSPDLDGKRNDEKWWIPTVKVPPDGLSEASRRFLQYQKDCVNQVLKAAMAINAQVLFEMEIPESYIDSLPKNGRASLGDQMYKNITVDFFDPDQFLSSMDMSSEHKIVDLKNRIEASIIIWKRKMVYKDNKSSAPWASGVSLEKREVFEERAETILLILKQRYPGISQSSLDISKIQFNEDVGQAVLESYSRILESLAYTVLSRIDDVLEADRAGNKRNTPLEAEEETLVGSMTLSDFMGWDFDQAANAELESKKDLPDDPLIKEKLSVVTTKKTSYLETLGGVKSPTARH.

Positions 83-446 (QARERQLLAD…RAGNKRNTPL (364 aa)) constitute a PRONE domain. Position 510 is a phosphoserine (serine 510).

In terms of assembly, interacts (via C-terminus) with PRK2. Interacts with PRK6. Expressed in pollen grains.

Its subcellular location is the cytoplasm. It localises to the cell membrane. Its activity is regulated as follows. Phosphorylation at Ser-510 by PRK2 may release ROPGEF12 auto-inhibition, thereby activating ROPGEF12 and downstream Rop signaling. Guanine-nucleotide exchange factor (GEF) that acts as an activator of Rop (Rho of plants) GTPases by promoting the exchange of GDP for GTP. May be recruited by PRK2 at the plasma membrane to maintain polar Rop activity in the pollen tube and control polarized pollen tube growth. The sequence is that of Rop guanine nucleotide exchange factor 12 from Arabidopsis thaliana (Mouse-ear cress).